We begin with the raw amino-acid sequence, 984 residues long: Lateral signaling target protein 2 homolog (984 aa).

Disordered stretches follow at residues 308–462, 508–527, 539–642, and 749–900; these read PLGS…DTDE, YGTT…PSTS, RLRL…SSLS, and DNVF…SPPA. 4 stretches are compositionally biased toward low complexity: residues 326–356, 369–380, 387–404, and 412–433; these read TTSS…TTST, NNHNSNSNSSTN, TLRS…TPTA, and PSHS…PADW. Over residues 434–462 the composition is skewed to acidic residues; the sequence is SDGDDEDEDDDDIEVDEEDLESSDDDTDE. Phosphoserine is present on residues serine 544 and serine 545. Over residues 571-611 the composition is skewed to basic residues; sequence RESHSHRHHQRHHHHHHHRHSHQHQHRQPHPHRTTRSGRKR. Low complexity predominate over residues 630–642; sequence LASGDTSAASSLS. Composition is skewed to polar residues over residues 760 to 779 and 789 to 806; these read ATGQ…TIDL and SGAT…SRSL. Residue serine 805 is modified to Phosphoserine. 2 stretches are compositionally biased toward low complexity: residues 811–869 and 886–899; these read AASS…PVSA and PSSA…LSPP. The segment at 904-964 adopts an FYVE-type zinc-finger fold; the sequence is DGKAPRCMAC…VCRDCYVREV (61 aa). The Zn(2+) site is built by cysteine 910, cysteine 913, cysteine 926, cysteine 929, cysteine 934, cysteine 937, cysteine 956, and cysteine 959.

It belongs to the lst-2 family.

Negative regulator of epidermal growth factor receptor (EGFR) signaling. The protein is Lateral signaling target protein 2 homolog of Drosophila yakuba (Fruit fly).